The following is a 144-amino-acid chain: Mediator of RNA polymerase II transcription subunit 9 (144 aa).

A coiled-coil region spans residues 85 to 143 (QDCNHKIFELQKRFESAREQIRQLPGIDFNKEEQQQRLELLRNQLKLKQQLIRKYKDTE).

Belongs to the Mediator complex subunit 9 family. As to quaternary structure, component of the Mediator complex.

It localises to the nucleus. Component of the Mediator complex, a coactivator involved in the regulated transcription of nearly all RNA polymerase II-dependent genes. Mediator functions as a bridge to convey information from gene-specific regulatory proteins to the basal RNA polymerase II transcription machinery. Mediator is recruited to promoters by direct interactions with regulatory proteins and serves as a scaffold for the assembly of a functional preinitiation complex with RNA polymerase II and the general transcription factors. The polypeptide is Mediator of RNA polymerase II transcription subunit 9 (MED9) (Drosophila melanogaster (Fruit fly)).